Here is a 524-residue protein sequence, read N- to C-terminus: Chromosomal replication initiator protein DnaA (524 aa).

Residues 1-73 (MELPESAWEQ…DELLSSADHH (73 aa)) are domain I, interacts with DnaA modulators. The segment at 73–187 (HPITSVEISV…DVEGGLQHKS (115 aa)) is domain II. 3 stretches are compositionally biased toward polar residues: residues 86–95 (RSTSFETNQG), 106–126 (APRQ…QPQQ), and 153–165 (NGYN…QPYN). The disordered stretch occupies residues 86 to 173 (RSTSFETNQG…YNDNPMGQGK (88 aa)). The interval 188–404 (NLNPTFIFDN…GALKRVIANA (217 aa)) is domain III, AAA+ region. ATP contacts are provided by Gly-232, Gly-234, Lys-235, and Thr-236. The segment at 405-524 (HFTGRDISVE…VKNLLRTLTT (120 aa)) is domain IV, binds dsDNA.

The protein belongs to the DnaA family. Oligomerizes as a right-handed, spiral filament on DNA at oriC.

Its subcellular location is the cytoplasm. Its function is as follows. Plays an essential role in the initiation and regulation of chromosomal replication. ATP-DnaA binds to the origin of replication (oriC) to initiate formation of the DNA replication initiation complex once per cell cycle. Binds the DnaA box (a 9 base pair repeat at the origin) and separates the double-stranded (ds)DNA. Forms a right-handed helical filament on oriC DNA; dsDNA binds to the exterior of the filament while single-stranded (ss)DNA is stabiized in the filament's interior. The ATP-DnaA-oriC complex binds and stabilizes one strand of the AT-rich DNA unwinding element (DUE), permitting loading of DNA polymerase. After initiation quickly degrades to an ADP-DnaA complex that is not apt for DNA replication. Binds acidic phospholipids. This is Chromosomal replication initiator protein DnaA from Saccharophagus degradans (strain 2-40 / ATCC 43961 / DSM 17024).